The chain runs to 482 residues: ATP synthase subunit beta (482 aa).

162–169 (GGAGVGKT) is a binding site for ATP.

Belongs to the ATPase alpha/beta chains family. F-type ATPases have 2 components, CF(1) - the catalytic core - and CF(0) - the membrane proton channel. CF(1) has five subunits: alpha(3), beta(3), gamma(1), delta(1), epsilon(1). CF(0) has four main subunits: a(1), b(1), b'(1) and c(9-12).

The protein resides in the cellular thylakoid membrane. It catalyses the reaction ATP + H2O + 4 H(+)(in) = ADP + phosphate + 5 H(+)(out). Produces ATP from ADP in the presence of a proton gradient across the membrane. The catalytic sites are hosted primarily by the beta subunits. This chain is ATP synthase subunit beta, found in Synechococcus sp. (strain PCC 6716).